The sequence spans 801 residues: Cadherin-20 (801 aa).

Positions 1 to 34 (MWTTGRMSNAKSWLGLGTSLYFWALMDLTATVLS) are cleaved as a signal peptide. Residues 35–59 (STPMPEVELETLFSGRSQSHQRSKR) constitute a propeptide that is removed on maturation. Residues 60–619 (SWVWNQFFVL…AYLLPVSLSR (560 aa)) are Extracellular-facing. Cadherin domains lie at 61 to 165 (WVWN…EPKF), 166 to 274 (LDGP…PPRF), 275 to 389 (PQKH…PPVF), 390 to 494 (EPGF…APEF), and 494 to 610 (FPRF…SPEA). N-linked (GlcNAc...) asparagine glycosylation is present at Asn-261. Asn-420, Asn-461, and Asn-542 each carry an N-linked (GlcNAc...) asparagine glycan. The chain crosses the membrane as a helical span at residues 620-640 (GALIAILACIFVLLVLVLLIL). At 641-801 (SMRRHRKQPY…GASEGPAPLW (161 aa)) the chain is on the cytoplasmic side.

Expressed in brain. Highest level of expression in the retina. In embryo it is synthesized by the forebrain, anterior neural ridge, developing visual system, primitive external granular layer of the cerebellum and a subset of neural crest cells likely to develop into melanoblasts.

It is found in the cell membrane. Functionally, cadherins are calcium-dependent cell adhesion proteins. They preferentially interact with themselves in a homophilic manner in connecting cells; cadherins may thus contribute to the sorting of heterogeneous cell types. In Mus musculus (Mouse), this protein is Cadherin-20 (Cdh20).